The chain runs to 436 residues: Methanethiol oxidase (436 aa).

An N-terminal signal peptide occupies residues 1–24; it reads MKRREFGALAAGALAMGLPFRAFA.

This sequence belongs to the selenium-binding protein family.

It is found in the periplasm. It catalyses the reaction methanethiol + O2 + H2O = hydrogen sulfide + formaldehyde + H2O2 + H(+). The protein operates within organosulfur degradation. Its function is as follows. Catalyzes the oxidation of methanethiol. The polypeptide is Methanethiol oxidase (Ruegeria pomeroyi (strain ATCC 700808 / DSM 15171 / DSS-3) (Silicibacter pomeroyi)).